A 223-amino-acid polypeptide reads, in one-letter code: Transmembrane protein 126 (223 aa).

Residues 1–39 (MALSRAKPDELPRDAVVITEDQALKYQWKIITSWDKIGE) are Mitochondrial matrix-facing. The helical transmembrane segment at 40 to 62 (VWSLRYTPGILSALAAGTGAYIN) threads the bilayer. Residues 63–78 (NHYRTKLRLGGHGRLS) are Mitochondrial intermembrane-facing. A helical membrane pass occupies residues 79 to 99 (TYLPIVAVPAIFTMLAHKFFI). Residues 100-123 (QRPILLNPLGECPVCIQMRSAAFQ) lie on the Mitochondrial matrix side of the membrane. A helical transmembrane segment spans residues 124–144 (TSLGIVYPTILAPFAAFLFAT). Residues 145–171 (RCYTYRIPSITENPREVFLLWRKFTRP) lie on the Mitochondrial intermembrane side of the membrane. The helical transmembrane segment at 172 to 192 (IVPALGTLIGLQALLTMFLTG) threads the bilayer. At 193–223 (QEDKQNFKLMLRMREIEHQVEEEHLPQRMDF) the chain is on the mitochondrial matrix side.

It belongs to the TMEM126 family. In terms of assembly, associates with mitochondrial complex I assembly intermediates during its biogenesis.

It is found in the mitochondrion membrane. Its function is as follows. As part of the MCIA complex, involved in the assembly of the mitochondrial complex I. The protein is Transmembrane protein 126 of Drosophila melanogaster (Fruit fly).